A 56-amino-acid polypeptide reads, in one-letter code: Cytochrome b-c1 complex subunit 10 (56 aa).

At 1 to 12 the chain is on the mitochondrial matrix side; the sequence is MLTRFLGPRYRQ. The helical transmembrane segment at 13–35 threads the bilayer; sequence LARNWVPTASLWGAVGAVGLVWA. Residues 36 to 56 are Mitochondrial intermembrane-facing; it reads TDWRLILDWVPYINGKFKKDD.

This sequence belongs to the UQCR11/QCR10 family. Component of the ubiquinol-cytochrome c oxidoreductase (cytochrome b-c1 complex, complex III, CIII), a multisubunit enzyme composed of 11 subunits. The complex is composed of 3 respiratory subunits cytochrome b, cytochrome c1 and Rieske protein UQCRFS1, 2 core protein subunits UQCRC1/QCR1 and UQCRC2/QCR2, and 6 low-molecular weight protein subunits UQCRH/QCR6, UQCRB/QCR7, UQCRQ/QCR8, UQCR10/QCR9, UQCR11/QCR10 and subunit 9, the cleavage product of Rieske protein UQCRFS1. The complex exists as an obligatory dimer and forms supercomplexes (SCs) in the inner mitochondrial membrane with NADH-ubiquinone oxidoreductase (complex I, CI) and cytochrome c oxidase (complex IV, CIV), resulting in different assemblies (supercomplex SCI(1)III(2)IV(1) and megacomplex MCI(2)III(2)IV(2)).

Its subcellular location is the mitochondrion inner membrane. Its function is as follows. Component of the ubiquinol-cytochrome c oxidoreductase, a multisubunit transmembrane complex that is part of the mitochondrial electron transport chain which drives oxidative phosphorylation. The respiratory chain contains 3 multisubunit complexes succinate dehydrogenase (complex II, CII), ubiquinol-cytochrome c oxidoreductase (cytochrome b-c1 complex, complex III, CIII) and cytochrome c oxidase (complex IV, CIV), that cooperate to transfer electrons derived from NADH and succinate to molecular oxygen, creating an electrochemical gradient over the inner membrane that drives transmembrane transport and the ATP synthase. The cytochrome b-c1 complex catalyzes electron transfer from ubiquinol to cytochrome c, linking this redox reaction to translocation of protons across the mitochondrial inner membrane, with protons being carried across the membrane as hydrogens on the quinol. In the process called Q cycle, 2 protons are consumed from the matrix, 4 protons are released into the intermembrane space and 2 electrons are passed to cytochrome c. QCR10 has a role in CIII assembly and RIP1 stability. This is Cytochrome b-c1 complex subunit 10 (UQCR11) from Bos taurus (Bovine).